A 192-amino-acid polypeptide reads, in one-letter code: Small ribosomal subunit protein bS16 (192 aa).

A disordered region spans residues 153 to 192 (AEAKAKAEAEAAAAAEEAAETEETPVEAAAEEAPAAESAE). The span at 178-192 (VEAAAEEAPAAESAE) shows a compositional bias: low complexity.

The protein belongs to the bacterial ribosomal protein bS16 family.

In Porphyromonas gingivalis (strain ATCC BAA-308 / W83), this protein is Small ribosomal subunit protein bS16.